We begin with the raw amino-acid sequence, 1409 residues long: MKSSGPVERLLRALGRRDSSRAASRPRKAEPHSFREKVFRKKPPVCAVCKVTIDGTGVSCRVCKVATHRKCEAKVTSACQALPPVELRRNTAPVRRIEHLGSTKSLNHSKQRSTLPRSFSLDPLMERRWDLDLTYVTERILAAAFPARPDEQRHRGHLRELAHVLQSKHRDKYLLFNLSEKRHDLTRLNPKVQDFGWPELHAPPLDKLCSICKAMETWLSADPQHVVVLYCKGNKGKLGVIVSAYMHYSKISAGADQALATLTMRKFCEDKVATELQPSQRRYISYFSGLLSGSIRMNSSPLFLHYVLIPMLPAFEPGTGFQPFLKIYQSMQLVYTSGVYHIAGPGPQQLCISLEPALLLKGDVMVTCYHKGGRGTDRTLVFRVQFHTCTIHGPQLTFPKDQLDEAWTDERFPFQASVEFVFSSSPEKIKGSTPRNDPSVSVDYNTTEPAVRWDSYENFNQHHEDSVDGSLTHTRGPLDGSPYAQVQRPPRQTPPAPSPEPPPPPMLSVSSDSGHSSTLTTEPAAESPGRPPPTAAERQELDRLLGGCGVASGGRGAGRETAILDDEEQPTVGGGPHLGVYPGHRPGLSRHCSCRQGYREPCGVPNGGYYRPEGTLERRRLAYGGYEGSPQGYAEASMEKRRLCRSLSEGLYPYPPEMGKPATGDFGYRAPGYREVVILEDPGLPALYPCPACEEKLALPTAALYGLRLEREAGEGWASEAGKPLLHPVRPGHPLPLLLPACGHHHAPMPDYSCLKPPKAGEEGHEGCSYTMCPEGRYGHPGYPALVTYSYGGAVPSYCPAYGRVPHSCGSPGEGRGYPSPGAHSPRAGSISPGSPPYPQSRKLSYEIPTEEGGDRYPLPGHLASAGPLASAESLEPVSWREGPSGHSTLPRSPRDAPCSASSELSGPSTPLHTSSPVQGKESTRRQDTRSPTSAPTQRLSPGEALPPVSQAGTGKAPELPSGSGPEPLAPSPVSPTFPPSSPSDWPQERSPGGHSDGASPRSPVPTTLPGLRHAPWQGPRGPPDSPDGSPLTPVPSQMPWLVASPEPPQSSPTPAFPLAASYDTNGLSQPPLPEKRHLPGPGQQPGPWGPEQASSPARGISHHVTFAPLLSDNVPQTPEPPTQESQSNVKFVQDTSKFWYKPHLSRDQAIALLKDKDPGAFLIRDSHSFQGAYGLALKVATPPPSAQPWKGDPVEQLVRHFLIETGPKGVKIKGCPSEPYFGSLSALVSQHSISPISLPCCLRIPSKDPLEETPEAPVPTNMSTAADLLRQGAACSVLYLTSVETESLTGPQAVARASSAALSCSPRPTPAVVHFKVSAQGITLTDNQRKLFFRRHYPVNSITFSSTDPQDRRWTNPDGTTSKIFGFVAKKPGSPWENVCHLFAELDPDQPAGAIVTFITKVLLGQRK.

The segment at 1-35 (MKSSGPVERLLRALGRRDSSRAASRPRKAEPHSFR) is disordered. Residues 9 to 20 (RLLRALGRRDSS) show a composition bias toward basic and acidic residues. The segment at 31–79 (PHSFREKVFRKKPPVCAVCKVTIDGTGVSCRVCKVATHRKCEAKVTSAC) adopts a Phorbol-ester/DAG-type zinc-finger fold. Thr91 is modified (phosphothreonine). Residues Ser118 and Ser120 each carry the phosphoserine modification. Residues 122–294 (DPLMERRWDL…SYFSGLLSGS (173 aa)) enclose the Phosphatase tensin-type domain. Cys231 serves as the catalytic Phosphocysteine intermediate. The C2 tensin-type domain occupies 299–425 (SSPLFLHYVL…ASVEFVFSSS (127 aa)). Ser455 carries the phosphoserine modification. Position 456 is a phosphotyrosine (Tyr456). Positions 462–536 (HHEDSVDGSL…SPGRPPPTAA (75 aa)) are disordered. Ser466 carries the post-translational modification Phosphoserine. Thr474 carries the post-translational modification Phosphothreonine. At Ser481 the chain carries Phosphoserine. Tyr483 carries the post-translational modification Phosphotyrosine. Residues 491 to 506 (RQTPPAPSPEPPPPPM) show a composition bias toward pro residues. Residue Arg555 is modified to Omega-N-methylarginine. 3 disordered regions span residues 562-582 (AILD…GVYP), 812-1098 (PGEG…SSPA), and 1111-1130 (LSDN…QSNV). Residues Ser820, Ser825, Ser830, Ser832, Ser835, and Ser845 each carry the phosphoserine modification. Polar residues-rich tracts occupy residues 900 to 918 (SASS…SSPV) and 930 to 940 (RSPTSAPTQRL). Phosphothreonine is present on Thr910. A phosphoserine mark is found at Ser931, Ser941, and Ser972. Over residues 968–982 (PLAPSPVSPTFPPSS) the composition is skewed to pro residues. Thr977 carries the post-translational modification Phosphothreonine. A phosphoserine mark is found at Ser991 and Ser1003. Pro residues predominate over residues 1046 to 1056 (PEPPQSSPTPA). The 108-residue stretch at 1140 to 1247 (WYKPHLSRDQ…SLPCCLRIPS (108 aa)) folds into the SH2 domain. Residue Thr1182 is modified to Phosphothreonine. The residue at position 1247 (Ser1247) is a Phosphoserine. The PTB domain occupies 1275 to 1408 (ACSVLYLTSV…FITKVLLGQR (134 aa)).

Belongs to the PTEN phosphatase protein family. Interacts with AXL. Interacts with SYK; leading to its phosphorylation. Interacts with SQSTM1 (via PB1 domain); the interaction leads to sequestration of TNS2 in cytoplasmic aggregates with SQSTM1 and promotes TNS2 ubiquitination and proteasomal degradation. In terms of processing, ubiquitinated following sequestration in cytoplasmic aggregates with SQSTM1, leading to proteasomal degradation. In terms of tissue distribution, detected in heart, kidney, brain, thymus, spleen, liver, placenta, lung, skeletal muscle and small intestine.

It is found in the cell junction. It localises to the focal adhesion. Its subcellular location is the cell membrane. The protein resides in the cytoplasm. It catalyses the reaction O-phospho-L-tyrosyl-[protein] + H2O = L-tyrosyl-[protein] + phosphate. Its function is as follows. Tyrosine-protein phosphatase which regulates cell motility, proliferation and muscle-response to insulin. Phosphatase activity is mediated by binding to phosphatidylinositol-3,4,5-triphosphate (PtdIns(3,4,5)P3) via the SH2 domain. In muscles and under catabolic conditions, dephosphorylates IRS1 leading to its degradation and muscle atrophy. Negatively regulates PI3K-AKT pathway activation. Dephosphorylates nephrin NPHS1 in podocytes which regulates activity of the mTORC1 complex. Under normal glucose conditions, NPHS1 outcompetes IRS1 for binding to phosphatidylinositol 3-kinase (PI3K) which balances mTORC1 activity but high glucose conditions lead to up-regulation of TNS2, increased NPHS1 dephosphorylation and activation of mTORC1, contributing to podocyte hypertrophy and proteinuria. Required for correct podocyte morphology, podocyte-glomerular basement membrane interaction and integrity of the glomerular filtration barrier. Enhances RHOA activation in the presence of DLC1. Plays a role in promoting DLC1-dependent remodeling of the extracellular matrix. This chain is Tensin-2 (TNS2), found in Homo sapiens (Human).